Consider the following 209-residue polypeptide: Dual specificity phosphatase 29 (209 aa).

Residues 44 to 193 form the Tyrosine-protein phosphatase domain; that stretch reads NHVNEVWPNL…LRELDIQLAL (150 aa). 137–144 serves as a coordination point for substrate; sequence NCAMGRSR. Cys138 (phosphocysteine intermediate) is an active-site residue.

This sequence belongs to the protein-tyrosine phosphatase family. Non-receptor class dual specificity subfamily.

Its subcellular location is the cytoplasm. The protein localises to the nucleus. It carries out the reaction O-phospho-L-tyrosyl-[protein] + H2O = L-tyrosyl-[protein] + phosphate. The catalysed reaction is O-phospho-L-seryl-[protein] + H2O = L-seryl-[protein] + phosphate. It catalyses the reaction O-phospho-L-threonyl-[protein] + H2O = L-threonyl-[protein] + phosphate. Dual specificity phosphatase able to dephosphorylate phosphotyrosine, phosphoserine and phosphothreonine residues within the same substrate, with a preference for phosphotyrosine as a substrate. Involved in the modulation of AMPK and MAPK1/2 signaling pathways. This chain is Dual specificity phosphatase 29 (dusp29), found in Xenopus tropicalis (Western clawed frog).